We begin with the raw amino-acid sequence, 105 residues long: Guanyl-specific ribonuclease U1 (105 aa).

A Pyrrolidone carboxylic acid modification is found at glutamine 1. Intrachain disulfides connect cysteine 8-cysteine 103 and cysteine 51-cysteine 87. Histidine 37 is an active-site residue. Catalysis depends on glutamate 57, which acts as the Proton acceptor. Residue histidine 92 is the Proton donor of the active site.

It belongs to the ribonuclease N1/T1 family.

It catalyses the reaction [RNA] containing guanosine + H2O = an [RNA fragment]-3'-guanosine-3'-phosphate + a 5'-hydroxy-ribonucleotide-3'-[RNA fragment].. This Ustilago sphaerogena (Smut fungus) protein is Guanyl-specific ribonuclease U1.